The following is a 631-amino-acid chain: MPTTFQEIPRERPVTPLLDRADTPAGLRRLAEADLETLADELRQELLYTVGQTGGHFGAGLGVIELTIALHYVFDTPDDRLVWDVGHQAYPHKILTGRRNRMLSLRQKDGIAAFPRRSESEYDTFGVGHSSTSISAALGMAIAARLQNSARKSIAVIGDGALTAGMAFEALNHAQEVNADMLVILNDNDMSISRNVGGLSNYLAKILSSRTYASMREGSKKVLSRLPGAWEIARRTEEYAKGMLVPGTLFEELGWNYIGPIDGHDLPTMIATLRNMRDLKGPQFLHVVTKKGKGFAPAEIDPIGYHAITKLEPADKPAAPKKASGPKYSAVFGQWLCDMAAADNRLVGITPAMKEGSDLVDFSERYPERYFDVAIAEQHAVTLAAGMACEGSKPVVAIYSTFLQRAYDQLIHDVAVQNLDVLFAIDRAGLVGEDGPTHAGSYDLSYLRCIPGMLVMTPSDENELRKMLSTGHLYNGPAAVRYPRGTGPNAPISGDLQPLEIGKGVVRRQGEKVALLVFGVQLAEAMQVAEQINATVVDMRFVKPLDEALVLELAGSHELLVTIEENAIMGGAGAAVGEFLASQAVLKPLLHLGLPDIYVEHAKPAQMLAECGLDAAGIEASVKARMARLGL.

Residues H87 and 128–130 (GHS) contribute to the thiamine diphosphate site. Position 159 (D159) interacts with Mg(2+). Residues 160–161 (GA), N188, F295, and E377 each bind thiamine diphosphate. N188 serves as a coordination point for Mg(2+).

This sequence belongs to the transketolase family. DXPS subfamily. As to quaternary structure, homodimer. Mg(2+) serves as cofactor. The cofactor is thiamine diphosphate.

The catalysed reaction is D-glyceraldehyde 3-phosphate + pyruvate + H(+) = 1-deoxy-D-xylulose 5-phosphate + CO2. The protein operates within metabolic intermediate biosynthesis; 1-deoxy-D-xylulose 5-phosphate biosynthesis; 1-deoxy-D-xylulose 5-phosphate from D-glyceraldehyde 3-phosphate and pyruvate: step 1/1. In terms of biological role, catalyzes the acyloin condensation reaction between C atoms 2 and 3 of pyruvate and glyceraldehyde 3-phosphate to yield 1-deoxy-D-xylulose-5-phosphate (DXP). In Pseudomonas putida (strain ATCC 47054 / DSM 6125 / CFBP 8728 / NCIMB 11950 / KT2440), this protein is 1-deoxy-D-xylulose-5-phosphate synthase.